We begin with the raw amino-acid sequence, 333 residues long: MAALAPPVAAIRRAVRRALTTLPDAGPVLVACSGGADSLALAAATAFVAPRLGRPAGLVTVDHGLQEGSARRATAVVDWAHTAGLAPVEAIRVDVSERPGGPEAAAREARYQALTEAAGRLGAAALLTGHTRDDQAETVLLALARGAGPRGLAGMPTRRWLGEALLLRPLLEVSREQTRAACTALGLAPWTDPHNTDPAYARARVRSEVLPALVRALGPGVLDNLARTARLVAADTAALDEQATVALDGVRHPDGGLCVGGLAGLAPAVRGRVLHVWARELGARPGALSHRHVDALEALVTGWRGQGAAYLPGGLRVFRRAGRLTVVDPCPPA.

An ATP-binding site is contributed by 33–38; that stretch reads SGGADS.

Belongs to the tRNA(Ile)-lysidine synthase family.

It localises to the cytoplasm. The enzyme catalyses cytidine(34) in tRNA(Ile2) + L-lysine + ATP = lysidine(34) in tRNA(Ile2) + AMP + diphosphate + H(+). Functionally, ligates lysine onto the cytidine present at position 34 of the AUA codon-specific tRNA(Ile) that contains the anticodon CAU, in an ATP-dependent manner. Cytidine is converted to lysidine, thus changing the amino acid specificity of the tRNA from methionine to isoleucine. The protein is tRNA(Ile)-lysidine synthase of Salinispora arenicola (strain CNS-205).